A 430-amino-acid chain; its full sequence is Endo-beta-1,4-glucanase celB (430 aa).

Positions 1 to 16 are cleaved as a signal peptide; it reads MALLLSLSLLATTISA. Residues N43 and N153 are each glycosylated (N-linked (GlcNAc...) asparagine). Residue E216 is the Nucleophile of the active site. The Proton donor role is filled by E221. N395 is a glycosylation site (N-linked (GlcNAc...) asparagine).

This sequence belongs to the glycosyl hydrolase 7 (cellulase C) family.

Its subcellular location is the secreted. The catalysed reaction is Endohydrolysis of (1-&gt;4)-beta-D-glucosidic linkages in cellulose, lichenin and cereal beta-D-glucans.. In terms of biological role, has endoglucanase activity on substrates containing beta-1,4 glycosidic bonds, like in carboxymethylcellulose (CMC), hydroxyethylcellulose (HEC) and beta-glucan. Involved in the degradation of complex natural cellulosic substrates. This is Endo-beta-1,4-glucanase celB (celB) from Emericella nidulans (strain FGSC A4 / ATCC 38163 / CBS 112.46 / NRRL 194 / M139) (Aspergillus nidulans).